A 334-amino-acid polypeptide reads, in one-letter code: Glyceraldehyde-3-phosphate dehydrogenase (334 aa).

NAD(+) contacts are provided by residues 12 to 13 and glycine 111; that span reads TI. 140–142 contributes to the D-glyceraldehyde 3-phosphate binding site; the sequence is SCN. Cysteine 141 acts as the Nucleophile in catalysis. Arginine 167 lines the NAD(+) pocket. Residue 192-193 participates in D-glyceraldehyde 3-phosphate binding; that stretch reads HG. Glutamine 298 is an NAD(+) binding site.

This sequence belongs to the glyceraldehyde-3-phosphate dehydrogenase family. In terms of assembly, homotetramer.

The protein localises to the cytoplasm. It catalyses the reaction D-glyceraldehyde 3-phosphate + phosphate + NADP(+) = (2R)-3-phospho-glyceroyl phosphate + NADPH + H(+). The enzyme catalyses D-glyceraldehyde 3-phosphate + phosphate + NAD(+) = (2R)-3-phospho-glyceroyl phosphate + NADH + H(+). The protein operates within carbohydrate degradation; glycolysis; pyruvate from D-glyceraldehyde 3-phosphate: step 1/5. The polypeptide is Glyceraldehyde-3-phosphate dehydrogenase (Thermococcus onnurineus (strain NA1)).